The following is a 224-amino-acid chain: Cytidylate kinase (224 aa).

9–17 is an ATP binding site; sequence GPSGVGKGT.

Belongs to the cytidylate kinase family. Type 1 subfamily.

The protein resides in the cytoplasm. It carries out the reaction CMP + ATP = CDP + ADP. The enzyme catalyses dCMP + ATP = dCDP + ADP. The chain is Cytidylate kinase from Dichelobacter nodosus (strain VCS1703A).